The primary structure comprises 155 residues: uncharacterized protein (155 aa).

Residues 4–65 (IDEVDEIILR…IIDHSFLGEF (62 aa)) enclose the HTH asnC-type domain. A DNA-binding region (H-T-H motif) is located at residues 23 to 42 (LTELSRKVGLTPAAIKNRVE).

This is an uncharacterized protein from Pyrococcus furiosus (strain ATCC 43587 / DSM 3638 / JCM 8422 / Vc1).